A 326-amino-acid polypeptide reads, in one-letter code: Probable cell division protein WhiA (326 aa).

Residues 275–308 constitute a DNA-binding region (H-T-H motif); the sequence is SLDELGRLADPVMTKDAIAGRIRRLLAMADKRAL.

It belongs to the WhiA family.

Functionally, involved in cell division and chromosome segregation. This is Probable cell division protein WhiA from Pseudarthrobacter chlorophenolicus (strain ATCC 700700 / DSM 12829 / CIP 107037 / JCM 12360 / KCTC 9906 / NCIMB 13794 / A6) (Arthrobacter chlorophenolicus).